The sequence spans 482 residues: Replication factor C large subunit (482 aa).

46–53 (GPPGSGKT) contacts ATP. The segment at 420-482 (EKETPKKKKK…KKQATLDSFF (63 aa)) is disordered. Positions 442 to 476 (KISEPPKEPLKEVIEETVEKTDKKEKEKKDPKKQA) are enriched in basic and acidic residues.

This sequence belongs to the activator 1 small subunits family. RfcL subfamily. Heteromultimer composed of small subunits (RfcS) and large subunits (RfcL).

Its function is as follows. Part of the RFC clamp loader complex which loads the PCNA sliding clamp onto DNA. The sequence is that of Replication factor C large subunit from Methanococcus maripaludis (strain C7 / ATCC BAA-1331).